A 314-amino-acid chain; its full sequence is Solute carrier family 25 member 44 (314 aa).

3 Solcar repeats span residues 18 to 100 (KKFY…TRKF), 107 to 210 (SNTV…YAEQ), and 220 to 302 (PHIV…LKKL). Helical transmembrane passes span 20–42 (FYVF…TLIR), 71–90 (AGLY…GQCY), 113–133 (LVAG…IDVV), 185–201 (GYVA…AVWW), 222–239 (IVFQ…ASIL), and 278–296 (LSAR…VVGY).

The protein belongs to the mitochondrial carrier (TC 2.A.29) family. In terms of tissue distribution, highly expressed in brown adipose tissues compared with other metabolic organs.

It is found in the mitochondrion membrane. The enzyme catalyses L-valine(in) = L-valine(out). The catalysed reaction is L-leucine(in) = L-leucine(out). Its function is as follows. Mitochondrial solute transporter which transports branched-chain amino acid (BCAA; valine, leucine and isoleucine) into mitochondria in brown adipose tissue (BAT). BAT is involved in BCAA catabolism and actively utilizes BCAA in the mitochondria for thermogenesis. In Mus musculus (Mouse), this protein is Solute carrier family 25 member 44.